The primary structure comprises 216 residues: Pyridoxine/pyridoxamine 5'-phosphate oxidase (216 aa).

FMN contacts are provided by residues 64–69, 79–80, Lys-85, Lys-86, and Gln-108; these read RVVLLK and FT. Lys-69 provides a ligand contact to substrate. Tyr-126, Arg-130, and Ser-134 together coordinate substrate. FMN contacts are provided by residues 143 to 144 and Trp-188; that span reads QS. 194–196 is a binding site for substrate; sequence RKH. Position 198 (Arg-198) interacts with FMN.

This sequence belongs to the pyridoxamine 5'-phosphate oxidase family. Homodimer. FMN serves as cofactor.

It catalyses the reaction pyridoxamine 5'-phosphate + O2 + H2O = pyridoxal 5'-phosphate + H2O2 + NH4(+). The catalysed reaction is pyridoxine 5'-phosphate + O2 = pyridoxal 5'-phosphate + H2O2. It participates in cofactor metabolism; pyridoxal 5'-phosphate salvage; pyridoxal 5'-phosphate from pyridoxamine 5'-phosphate: step 1/1. It functions in the pathway cofactor metabolism; pyridoxal 5'-phosphate salvage; pyridoxal 5'-phosphate from pyridoxine 5'-phosphate: step 1/1. Its function is as follows. Catalyzes the oxidation of either pyridoxine 5'-phosphate (PNP) or pyridoxamine 5'-phosphate (PMP) into pyridoxal 5'-phosphate (PLP). This is Pyridoxine/pyridoxamine 5'-phosphate oxidase from Wolbachia pipientis wMel.